The chain runs to 74 residues: NAD(P)H-quinone oxidoreductase subunit O (74 aa).

The protein belongs to the complex I NdhO subunit family. As to quaternary structure, NDH-1 can be composed of about 15 different subunits; different subcomplexes with different compositions have been identified which probably have different functions.

It localises to the cellular thylakoid membrane. It carries out the reaction a plastoquinone + NADH + (n+1) H(+)(in) = a plastoquinol + NAD(+) + n H(+)(out). The enzyme catalyses a plastoquinone + NADPH + (n+1) H(+)(in) = a plastoquinol + NADP(+) + n H(+)(out). Its function is as follows. NDH-1 shuttles electrons from an unknown electron donor, via FMN and iron-sulfur (Fe-S) centers, to quinones in the respiratory and/or the photosynthetic chain. The immediate electron acceptor for the enzyme in this species is believed to be plastoquinone. Couples the redox reaction to proton translocation, and thus conserves the redox energy in a proton gradient. Cyanobacterial NDH-1 also plays a role in inorganic carbon-concentration. The polypeptide is NAD(P)H-quinone oxidoreductase subunit O (Synechococcus sp. (strain RCC307)).